Reading from the N-terminus, the 545-residue chain is Endo-beta-N-acetylglucosaminidase (545 aa).

The signal sequence occupies residues 1-36 (MTFIKQMMPRYVASMTAGIVAAAMAATCAFAPVANA). A GH18 domain is found at 51–333 (RHFMVYYRAW…EDLRRIVPSN (283 aa)). Catalysis depends on glutamate 184, which acts as the Proton donor. The segment at 486–511 (PVPTPDSTDQNGNRDKVTNHKVQGQP) is disordered. Residues 518–538 (GISTDIIVAVGVTLAIAGVAL) form a helical membrane-spanning segment.

It belongs to the glycosyl hydrolase 18 family.

Its subcellular location is the cell membrane. The catalysed reaction is an N(4)-(oligosaccharide-(1-&gt;3)-[oligosaccharide-(1-&gt;6)]-beta-D-Man-(1-&gt;4)-beta-D-GlcNAc-(1-&gt;4)-alpha-D-GlcNAc)-L-asparaginyl-[protein] + H2O = an oligosaccharide-(1-&gt;3)-[oligosaccharide-(1-&gt;6)]-beta-D-Man-(1-&gt;4)-D-GlcNAc + N(4)-(N-acetyl-beta-D-glucosaminyl)-L-asparaginyl-[protein]. Endoglycosidase with broad specificity that cleaves the chitobiose core of high mannose and complex N-linked glycans. Is able to release N-glycans from diverse host glycoproteins such as human and bovine lactoferrin, immunoglobulins A and G, and ribonuclease B. Is active directly on human breast milk - a complex matrix of lipids, oligosaccharides, and proteins with disparate glycosylation types - successfully removing a significant proportion of the total amount of N-glycans. Does not recognize O-linked glycans or free human milk oligosaccharides (HMO). In Bifidobacterium longum subsp. infantis (strain ATCC 15697 / DSM 20088 / JCM 1222 / NCTC 11817 / S12), this protein is Endo-beta-N-acetylglucosaminidase.